A 341-amino-acid polypeptide reads, in one-letter code: HTH-type transcriptional repressor PurR (341 aa).

Positions 2–56 (ATIKDVAKRANVSTTTVSHVINKTRFVSEETRNAVWAAIKELHYSPSAVARSLKV) constitute an HTH lacI-type domain. Residues 4 to 23 (IKDVAKRANVSTTTVSHVIN) constitute a DNA-binding region (H-T-H motif). Residues 48 to 56 (SAVARSLKV) mediate DNA binding. Hypoxanthine is bound by residues Tyr73, Arg190, Thr192, Phe221, and Asp275.

Homodimer.

The protein operates within purine metabolism; purine nucleotide biosynthesis [regulation]. Functionally, is the main repressor of the genes involved in the de novo synthesis of purine nucleotides, regulating purB, purC, purEK, purF, purHD, purL, purMN and guaBA expression. PurR is allosterically activated to bind its cognate DNA by binding the purine corepressors, hypoxanthine or guanine, thereby effecting transcription repression. The protein is HTH-type transcriptional repressor PurR of Escherichia coli O139:H28 (strain E24377A / ETEC).